We begin with the raw amino-acid sequence, 333 residues long: Phosphate acyltransferase (333 aa).

The protein belongs to the PlsX family. In terms of assembly, homodimer. Probably interacts with PlsY.

It localises to the cytoplasm. The enzyme catalyses a fatty acyl-[ACP] + phosphate = an acyl phosphate + holo-[ACP]. Its pathway is lipid metabolism; phospholipid metabolism. Catalyzes the reversible formation of acyl-phosphate (acyl-PO(4)) from acyl-[acyl-carrier-protein] (acyl-ACP). This enzyme utilizes acyl-ACP as fatty acyl donor, but not acyl-CoA. The protein is Phosphate acyltransferase of Thermosipho melanesiensis (strain DSM 12029 / CIP 104789 / BI429).